Here is a 274-residue protein sequence, read N- to C-terminus: NH(3)-dependent NAD(+) synthetase (274 aa).

46–53 (GISGGQDS) serves as a coordination point for ATP. Aspartate 52 provides a ligand contact to Mg(2+). Arginine 140 provides a ligand contact to deamido-NAD(+). Threonine 160 provides a ligand contact to ATP. A Mg(2+)-binding site is contributed by glutamate 165. Positions 173 and 180 each coordinate deamido-NAD(+). 2 residues coordinate ATP: lysine 189 and threonine 211. 260–261 (HK) is a deamido-NAD(+) binding site.

Belongs to the NAD synthetase family. As to quaternary structure, homodimer.

It carries out the reaction deamido-NAD(+) + NH4(+) + ATP = AMP + diphosphate + NAD(+) + H(+). The protein operates within cofactor biosynthesis; NAD(+) biosynthesis; NAD(+) from deamido-NAD(+) (ammonia route): step 1/1. In terms of biological role, catalyzes the ATP-dependent amidation of deamido-NAD to form NAD. Uses ammonia as a nitrogen source. The polypeptide is NH(3)-dependent NAD(+) synthetase (Streptococcus equi subsp. zooepidemicus (strain H70)).